The primary structure comprises 365 residues: MSSSFGKIFRVSTFGESHGGAVGVILDGCPPKLKIDINLIQNELDRRRPGQSDITTPRNEEDKIEILSGIKEGLTLGTPIAMLVRNKDQRPADYNNMEQVFRPSHADGTYHLKYGIQASSGGGRASARETIGRVAAGAVAKQLLKTFCNTEILSWVKRIHDIDSDINKEKISLKKIDSNIVRCPDEKVSTEMIERIKELKRQGDSCGGVIECLVRNVPSGLGMPVFDKLEADLAKALMSLPATKGFEIGSGFSGTYLKGSEHNDSFIKSDDSSKLRTTSNNSGGIQGGISNGENIEMKIAFKPTATIGKEQKTVNAEGKEVLMKAKGRHDPCVLPRAVPMVDAMVALVLADHLLLNHAQCDLINN.

Arginine 47 contacts NADP(+). Residues 124-126, glycine 287, 302-306, and arginine 328 each bind FMN; these read RAS and KPTAT. The disordered stretch occupies residues 266 to 290; it reads FIKSDDSSKLRTTSNNSGGIQGGIS.

The protein belongs to the chorismate synthase family. As to quaternary structure, homotetramer. It depends on FMNH2 as a cofactor.

It catalyses the reaction 5-O-(1-carboxyvinyl)-3-phosphoshikimate = chorismate + phosphate. Its pathway is metabolic intermediate biosynthesis; chorismate biosynthesis; chorismate from D-erythrose 4-phosphate and phosphoenolpyruvate: step 7/7. Catalyzes the anti-1,4-elimination of the C-3 phosphate and the C-6 proR hydrogen from 5-enolpyruvylshikimate-3-phosphate (EPSP) to yield chorismate, which is the branch point compound that serves as the starting substrate for the three terminal pathways of aromatic amino acid biosynthesis. This reaction introduces a second double bond into the aromatic ring system. The chain is Chorismate synthase from Prochlorococcus marinus (strain MIT 9301).